The primary structure comprises 187 residues: NADH-quinone oxidoreductase subunit B (187 aa).

Residues Cys-55, Cys-56, Cys-121, and Cys-150 each coordinate [4Fe-4S] cluster.

This sequence belongs to the complex I 20 kDa subunit family. As to quaternary structure, NDH-1 is composed of 14 different subunits. Subunits NuoB, C, D, E, F, and G constitute the peripheral sector of the complex. The cofactor is [4Fe-4S] cluster.

The protein localises to the cell inner membrane. It catalyses the reaction a quinone + NADH + 5 H(+)(in) = a quinol + NAD(+) + 4 H(+)(out). Its function is as follows. NDH-1 shuttles electrons from NADH, via FMN and iron-sulfur (Fe-S) centers, to quinones in the respiratory chain. The immediate electron acceptor for the enzyme in this species is believed to be ubiquinone. Couples the redox reaction to proton translocation (for every two electrons transferred, four hydrogen ions are translocated across the cytoplasmic membrane), and thus conserves the redox energy in a proton gradient. The polypeptide is NADH-quinone oxidoreductase subunit B (Bdellovibrio bacteriovorus (strain ATCC 15356 / DSM 50701 / NCIMB 9529 / HD100)).